We begin with the raw amino-acid sequence, 461 residues long: High-affinity Na(+)/H(+) antiporter NhaS3 (461 aa).

Helical transmembrane passes span 22-42 (TEIAPLVLAGVLLSLVVIYFA), 58-78 (VLGELVGGVLVGVSALKLLLF), 113-133 (SEVISVISELGVIILLFEIGL), 148-170 (AIVAVVGVVTPFSLGTIGLMTIF), 175-197 (IPAIFAGAALTATSIGITAKVLA), 209-229 (IIIGAAVLDDILGIIVLAVVG), 239-259 (ISNIIYLILSATGFVVGSILI), 280-300 (LLLVSICVAFVLSYIAQIVQL), 360-380 (GLIIAAFLILVAIVGKVVTGF), 391-411 (LAIGVGMIPRGEVGLVFAGVG), and 424-444 (AIIVMVIVTTFVAPPWLRAVF).

The protein belongs to the monovalent cation:proton antiporter 2 (CPA2) transporter (TC 2.A.37) family.

It localises to the cellular thylakoid membrane. Na(+)/H(+) antiporter that transports sodium from the cytoplasm into the thylakoid lumen in exchange for protons. Contributes to sodium homeostasis and tolerance. Also has Li(+)/H(+) antiport activity under K(+)-free conditions, but not under K(+)-rich conditions. This chain is High-affinity Na(+)/H(+) antiporter NhaS3 (nhaS3), found in Synechocystis sp. (strain ATCC 27184 / PCC 6803 / Kazusa).